A 505-amino-acid chain; its full sequence is Beta-glucosidase 18 (505 aa).

The N-terminal stretch at 1–26 (MAGGSKTRIHASLVSTLLLLLPLASA) is a signal peptide. An a beta-D-glucoside-binding site is contributed by Gln-46. Asn-55 is a glycosylation site (N-linked (GlcNAc...) asparagine). A beta-D-glucoside contacts are provided by residues His-148 and 193–194 (NE). The active-site Proton donor is the Glu-194. Cysteines 213 and 220 form a disulfide. Tyr-337 is a binding site for a beta-D-glucoside. A disulfide bridge links Cys-345 with Cys-350. Residues Glu-408, Trp-457, 464 to 465 (EW), and Phe-473 each bind a beta-D-glucoside. The active-site Nucleophile is the Glu-408.

Belongs to the glycosyl hydrolase 1 family. As to expression, expressed in roots, leaves, flowers and pollen.

The catalysed reaction is Hydrolysis of terminal, non-reducing beta-D-glucosyl residues with release of beta-D-glucose.. In terms of biological role, hydrolyzes glycosides and monolignol glucosides. Can hydrolyze para-nitrophenyl beta-D-glucopyranoside (pNPGlc) in vitro. Hydrolyzes para-nitrophenyl beta-D-fucopyranoside, para-nitrophenyl beta-D-galactopyranoside and para-nitrophenyl beta-D-xylopyranoside in vitro. Hydrolyzes the monolignol glucosides coniferin and syringin with high catalytic efficiencies. The chain is Beta-glucosidase 18 from Oryza sativa subsp. japonica (Rice).